Consider the following 138-residue polypeptide: uncharacterized protein (138 aa).

Helical transmembrane passes span 17–37 (LIVS…TVFF), 43–63 (INLI…LLVC), and 117–137 (FWWM…VVSL).

Its subcellular location is the cell membrane. This is an uncharacterized protein from Mycoplasma pneumoniae (strain ATCC 29342 / M129 / Subtype 1) (Mycoplasmoides pneumoniae).